Here is a 171-residue protein sequence, read N- to C-terminus: Neuronal vesicle trafficking-associated protein 2 (171 aa).

The disordered stretch occupies residues 1-21; the sequence is MVKLNSNPGEKGAKPPSVEDG. Over 1–71 the chain is Cytoplasmic; sequence MVKLNSNPGE…FRVPKIAEFT (71 aa). A helical; Signal-anchor for type II membrane protein transmembrane segment spans residues 72–92; that stretch reads VTILVSLALAFLACIVFLVVY. At 93 to 171 the chain is on the lumenal side; the sequence is KAFTYDHSCP…EPKPPKTQGH (79 aa).

It belongs to the NSG family. Specifically expressed in neural and neuroendocrine tissues. Pituitary and less in adrenal gland and testis. Expressed in the hippocampus throughout development. Remains enriched in layer V cortical neurons during development. At P0, broadly expressed in the neocortex. Is down-regulated overall at P8 and P14, but remains relatively enriched in layer V. At P0 is lower expressed in the cerebellum. Expression remains low throughout development, and is undetectable by adulthood.

Its subcellular location is the membrane. It localises to the golgi apparatus. The protein localises to the trans-Golgi network membrane. It is found in the cell projection. The protein resides in the dendrite. Its subcellular location is the endosome membrane. It localises to the early endosome membrane. The protein localises to the late endosome membrane. It is found in the lysosome lumen. The protein resides in the cytoplasmic vesicle membrane. Its subcellular location is the golgi stack membrane. It localises to the endosome. The protein localises to the multivesicular body membrane. The sequence is that of Neuronal vesicle trafficking-associated protein 2 from Mus musculus (Mouse).